Consider the following 340-residue polypeptide: MPMENDNGPHVGNVVVTAEQATKINETDGRLPENRQTGVVSDTGSGSERGEQGVGESAVAVAVPVEESGSISVGELPAPRSSSARVPFTNLSQIDADLALARTLQEQERAYMMLTMNSEISDYGSWETGSYVYDEDEFDDPENEDEDDDEDEYETDDDPQEDGLDVNVHANEDDQEDDGNSDIEEVAYTDDEAYARALQEAEERDMAARLSALSGLANRVVEDLEDESHTSQDAWDEMDPDELSYEELLALGDIVGTESRGLSADTIASLPSKRYKEGDNQNGTNESCVICRLDYEDDEDLILLPCKHSYHSECINNWLKINKVCPVCSAEVSTSTSGQS.

Disordered stretches follow at residues 1–56 and 133–182; these read MPME…GVGE and YDED…GNSD. Over residues 34–46 the composition is skewed to polar residues; it reads NRQTGVVSDTGSG. 2 stretches are compositionally biased toward acidic residues: residues 133 to 164 and 173 to 182; these read YDED…EDGL and DDQEDDGNSD. The RING-type; atypical zinc finger occupies 288–329; the sequence is CVICRLDYEDDEDLILLPCKHSYHSECINNWLKINKVCPVCS.

Post-translationally, auto-ubiquitinated.

The enzyme catalyses S-ubiquitinyl-[E2 ubiquitin-conjugating enzyme]-L-cysteine + [acceptor protein]-L-lysine = [E2 ubiquitin-conjugating enzyme]-L-cysteine + N(6)-ubiquitinyl-[acceptor protein]-L-lysine.. It participates in protein modification; protein ubiquitination. E3 ubiquitin-ligase probably involved in organ size regulation. This is E3 ubiquitin ligase BIG BROTHER-related (BBR) from Arabidopsis thaliana (Mouse-ear cress).